The sequence spans 341 residues: Biotin synthase (341 aa).

A Radical SAM core domain is found at 39–263 (EQVQLCTLLS…VAVARITMPL (225 aa)). Positions 54, 58, and 61 each coordinate [4Fe-4S] cluster. Residues Cys98, Cys129, Cys189, and Arg267 each coordinate [2Fe-2S] cluster.

Belongs to the radical SAM superfamily. Biotin synthase family. In terms of assembly, homodimer. The cofactor is [4Fe-4S] cluster. [2Fe-2S] cluster serves as cofactor.

It carries out the reaction (4R,5S)-dethiobiotin + (sulfur carrier)-SH + 2 reduced [2Fe-2S]-[ferredoxin] + 2 S-adenosyl-L-methionine = (sulfur carrier)-H + biotin + 2 5'-deoxyadenosine + 2 L-methionine + 2 oxidized [2Fe-2S]-[ferredoxin]. It functions in the pathway cofactor biosynthesis; biotin biosynthesis; biotin from 7,8-diaminononanoate: step 2/2. Catalyzes the conversion of dethiobiotin (DTB) to biotin by the insertion of a sulfur atom into dethiobiotin via a radical-based mechanism. The protein is Biotin synthase of Erythrobacter litoralis (strain HTCC2594).